A 61-amino-acid chain; its full sequence is Large ribosomal subunit protein eL37 (61 aa).

Residues C18, C21, C33, and C36 each contribute to the Zn(2+) site. Residues 18 to 36 form a C4-type zinc finger; that stretch reads CRRCGRNAYNPTKKYCASC.

The protein belongs to the eukaryotic ribosomal protein eL37 family. It depends on Zn(2+) as a cofactor.

Its function is as follows. Binds to the 23S rRNA. This Methanosphaera stadtmanae (strain ATCC 43021 / DSM 3091 / JCM 11832 / MCB-3) protein is Large ribosomal subunit protein eL37.